The chain runs to 396 residues: NADH-quinone oxidoreductase subunit D 1 (396 aa).

It belongs to the complex I 49 kDa subunit family. NDH-1 is composed of 14 different subunits. Subunits NuoB, C, D, E, F, and G constitute the peripheral sector of the complex.

The protein localises to the cell inner membrane. The catalysed reaction is a quinone + NADH + 5 H(+)(in) = a quinol + NAD(+) + 4 H(+)(out). Its function is as follows. NDH-1 shuttles electrons from NADH, via FMN and iron-sulfur (Fe-S) centers, to quinones in the respiratory chain. The immediate electron acceptor for the enzyme in this species is believed to be ubiquinone. Couples the redox reaction to proton translocation (for every two electrons transferred, four hydrogen ions are translocated across the cytoplasmic membrane), and thus conserves the redox energy in a proton gradient. This is NADH-quinone oxidoreductase subunit D 1 from Beijerinckia indica subsp. indica (strain ATCC 9039 / DSM 1715 / NCIMB 8712).